A 188-amino-acid chain; its full sequence is dCTP deaminase (188 aa).

Residues 111 to 116 (KSTYAR), 135 to 137 (TLE), Gln156, Tyr170, and Gln180 contribute to the dCTP site. Residue Glu137 is the Proton donor/acceptor of the active site.

This sequence belongs to the dCTP deaminase family. In terms of assembly, homotrimer.

The catalysed reaction is dCTP + H2O + H(+) = dUTP + NH4(+). Its pathway is pyrimidine metabolism; dUMP biosynthesis; dUMP from dCTP (dUTP route): step 1/2. Functionally, catalyzes the deamination of dCTP to dUTP. The sequence is that of dCTP deaminase from Pseudomonas fluorescens (strain SBW25).